Consider the following 109-residue polypeptide: Small ribosomal subunit protein uS17 (109 aa).

The protein belongs to the universal ribosomal protein uS17 family. As to quaternary structure, part of the 30S ribosomal subunit.

One of the primary rRNA binding proteins, it binds specifically to the 5'-end of 16S ribosomal RNA. In Methanococcus vannielii, this protein is Small ribosomal subunit protein uS17.